A 237-amino-acid polypeptide reads, in one-letter code: Opacity protein opA57 (237 aa).

Residue A1 is a signal peptide.

Belongs to the opacity porin family.

The protein resides in the cell outer membrane. Implicated in a number of adherence functions. OPA proteins are implicated in pathogenesis and are subject to phase variation. The sequence is that of Opacity protein opA57 (opaK) from Neisseria gonorrhoeae.